A 328-amino-acid polypeptide reads, in one-letter code: Pleckstrin homology domain protein OPY1 (328 aa).

Residues asparagine 19–histidine 52 are disordered. The span at proline 24–asparagine 41 shows a compositional bias: polar residues. The interval alanine 213–isoleucine 328 is required for targeting to the cell membrane. The PH domain occupies histidine 215–leucine 318.

As to quaternary structure, interacts with MSS4 (via N-terminus); to negatively regulate MSS4 kinase activity.

Its subcellular location is the cell membrane. The protein resides in the cytoplasm. Its function is as follows. Binds phosphatidylinositol 4,5-bisphosphate (PtdIns(4,5)P2/PIP2) at the cell membrane. Negatively regulates the activity of phosphatidylinositol 4-phosphate 5-kinase MSS4. The sequence is that of Pleckstrin homology domain protein OPY1 (OPY1) from Saccharomyces cerevisiae (strain ATCC 204508 / S288c) (Baker's yeast).